Consider the following 464-residue polypeptide: CRISPR system endoribonuclease Csm6 (464 aa).

Residues 1–190 are CARF domain; sequence MEDLDALWER…LRILPNPHEA (190 aa). The interval 191–464 is HEPN domain; the sequence is LAEVDALFAK…LSPEPVPLGF (274 aa).

The protein belongs to the CRISPR-associated Csm6 family. In terms of assembly, homodimer. The protein forms a twisted, head-to-head dimer; the composite ssRNase active site is formed at the dimer interface. Does not require a metal cofactor. serves as cofactor.

With respect to regulation, non-specific ssRNase activity is allosterically activated about 1000-fold by cyclic tetraadenylate (cA4), which probably binds to its CARF domain. Its function is as follows. CRISPR (clustered regularly interspaced short palindromic repeat) is an adaptive immune system that provides protection against mobile genetic elements (viruses, transposable elements and conjugative plasmids). CRISPR clusters contain spacers, sequences complementary to antecedent mobile elements, and target invading nucleic acids. CRISPR clusters are transcribed and processed into CRISPR RNA (crRNA). The type III-A Csm effector complex binds crRNA and acts as a crRNA-guided RNase, DNase and cyclic oligoadenylate synthase; binding of target RNA cognate to the crRNA is required for all activities. This protein is not part of the Csm effector complex. Functionally, a single-strand-specific endoribonuclease (ssRNase) producing free 5'-OH. Activity is approximately 1000-fold stimulated by cyclic oligoadenylate (cOA); only cyclic tetraadenylate (cA4) stimulates the ssRNase activity while linear oligoadenylates do not activate the RNase. Another study showed stimulation by linear tetraadenylate at very high concentrations, but did not examine stimulation by cA4. This is CRISPR system endoribonuclease Csm6 from Thermus thermophilus (strain ATCC 27634 / DSM 579 / HB8).